Reading from the N-terminus, the 521-residue chain is Cell cycle checkpoint protein hpr-9 (521 aa).

Disordered stretches follow at residues 1 to 20 (MQAI…TRER), 318 to 375 (QHEE…NRFV), and 492 to 521 (GTET…YESR). Composition is skewed to polar residues over residues 355 to 370 (ESLS…SLPS) and 493 to 504 (TETTSKMRMSQQ).

Belongs to the rad9 family. As to quaternary structure, putative component of the toroidal 9-1-1 (RAD9-RAD1-HUS1) complex, composed of hpr-9, mrt-2 and hus-1.

In terms of biological role, may be a component of the 9-1-1 cell-cycle checkpoint response complex that plays a major role in DNA repair. The sequence is that of Cell cycle checkpoint protein hpr-9 from Caenorhabditis elegans.